We begin with the raw amino-acid sequence, 465 residues long: Botryococcus squalene synthase (465 aa).

Positions 48 and 73 each coordinate NADP(+). D76, E79, and D80 together coordinate Mg(2+). Positions 215, 315, and 317 each coordinate NADP(+). The next 2 membrane-spanning stretches (helical) occupy residues 395–415 (AIRL…FNLG) and 429–449 (ILDL…LLVL).

Belongs to the phytoene/squalene synthase family.

The protein localises to the membrane. It carries out the reaction presqualene diphosphate + NADPH + H(+) = squalene + diphosphate + NADP(+). In terms of biological role, produces squalene when coexpressed with SSL-1 and bisfarnesyl ether and a very small amount of squalene when incubated alone in the presence of NADPH. The sequence is that of Botryococcus squalene synthase (SSL-2) from Botryococcus braunii (Green alga).